The following is a 920-amino-acid chain: Valine--tRNA ligase (920 aa).

Residues 40–50 (PNVTGTLHMGH) carry the 'HIGH' region motif. A 'KMSKS' region motif is present at residues 522 to 526 (KMSKS). Lys-525 is an ATP binding site. 2 coiled-coil regions span residues 642 to 668 (EWIRTRLQQTIKNAEEALSQYRFDLLA) and 849 to 920 (AGVI…IESL).

Belongs to the class-I aminoacyl-tRNA synthetase family. ValS type 1 subfamily. As to quaternary structure, monomer.

It is found in the cytoplasm. The enzyme catalyses tRNA(Val) + L-valine + ATP = L-valyl-tRNA(Val) + AMP + diphosphate. Functionally, catalyzes the attachment of valine to tRNA(Val). As ValRS can inadvertently accommodate and process structurally similar amino acids such as threonine, to avoid such errors, it has a 'posttransfer' editing activity that hydrolyzes mischarged Thr-tRNA(Val) in a tRNA-dependent manner. In Coxiella burnetii (strain RSA 493 / Nine Mile phase I), this protein is Valine--tRNA ligase.